The sequence spans 141 residues: MAKKVVAVIKLAITAGKANPSPPIGPALGQHGVNIMAFCKEYNAKTADQAGTVVPVEISVYEDRSFTFVLKTPPAAVLIKKAAGVESGSSEPNRTKVGSITQAQLQEIAQTKMPDLNANNIEAAMKIVAGTARNMGITISD.

This sequence belongs to the universal ribosomal protein uL11 family. In terms of assembly, part of the ribosomal stalk of the 50S ribosomal subunit. Interacts with L10 and the large rRNA to form the base of the stalk. L10 forms an elongated spine to which L12 dimers bind in a sequential fashion forming a multimeric L10(L12)X complex. In terms of processing, one or more lysine residues are methylated.

Forms part of the ribosomal stalk which helps the ribosome interact with GTP-bound translation factors. The polypeptide is Large ribosomal subunit protein uL11 (Trichodesmium erythraeum (strain IMS101)).